The following is a 249-amino-acid chain: Derlin-2 (249 aa).

The Cytoplasmic segment spans residues 1–21 (MAQAVEEWYRQMPIITRSYLT). Residues 22 to 42 (AAVVTTVGCTLEIISPYHLYL) form a helical membrane-spanning segment. Topologically, residues 43 to 96 (NPKLVVQHYEIWRLVTNFLYFRKMDLDFLFHMFFLARYCKLLEENSFRGRTADF) are lumenal. The chain crosses the membrane as a helical span at residues 97-117 (FYMLLFGATVLTGIVLIGGMI). Over 118–122 (PYISE) the chain is Cytoplasmic. A helical transmembrane segment spans residues 123-143 (TFARILFLSNSLTFMMVYVWS). Residues 144-152 (KHNPFIHMS) are Lumenal-facing. The chain crosses the membrane as a helical span at residues 153–173 (FLGLFTFTAAYLPWVLLGFSI). Topologically, residues 174 to 249 (LVGSSTWVDL…GAMGADPQAQ (76 aa)) are cytoplasmic.

It belongs to the derlin family.

The protein localises to the endoplasmic reticulum membrane. Its function is as follows. May be involved in the degradation process of specific misfolded endoplasmic reticulum (ER) luminal proteins. The chain is Derlin-2 (DER2) from Oryza sativa subsp. japonica (Rice).